The following is a 597-amino-acid chain: Alpha-1,2-mannosyltransferase MNN2 (597 aa).

The Cytoplasmic segment spans residues 1–6 (MIAKQK). The helical transmembrane segment at 7 to 27 (IKILIGVIIVIATYHFIVSSN) threads the bilayer. Residues 28–597 (VRSKDLSDLV…ETAEIPTVVS (570 aa)) are Extracellular-facing. The interval 39–89 (LGSSDKSTTENERPKNNIVTNNRLDNPPNEDIPHAEPDSPPQEPPKSGNKP) is disordered. Residue asparagine 382 is glycosylated (N-linked (GlcNAc...) asparagine).

Belongs to the MNN1/MNT family. The cofactor is Mn(2+).

It localises to the golgi apparatus membrane. It functions in the pathway protein modification; protein glycosylation. With respect to regulation, enzyme activity is regulated by iron. In terms of biological role, alpha-1,2-mannosyltransferase required for cell wall integrity. Responsible for addition of the first alpha-1,2-linked mannose to form the branches on the mannan backbone of oligosaccharides. Addition of alpha-1,2-mannose is required for stabilization of the alpha-1,6-mannose backbone and hence regulates mannan fibril length; and is important for both immune recognition and virulence. Promotes iron uptake and usage along the endocytosis pathway under iron-limiting conditions. The chain is Alpha-1,2-mannosyltransferase MNN2 (MNN2) from Candida albicans (strain SC5314 / ATCC MYA-2876) (Yeast).